Reading from the N-terminus, the 1067-residue chain is Probable importin subunit beta-4 (1067 aa).

In terms of domain architecture, Importin N-terminal spans 27 to 94; sequence ATRALETKYL…RSNLLDITLK (68 aa). 6 HEAT repeats span residues 159 to 196, 379 to 416, 420 to 457, 591 to 633, 890 to 927, and 1013 to 1050; these read KLLL…VLES, GNLP…EIPT, KHHA…GLDK, PFLE…SVET, PFTR…FSTE, and QHLG…EIAP.

Belongs to the importin beta family.

It localises to the cytoplasm. The protein resides in the nucleus. The protein localises to the nucleus envelope. Its function is as follows. Required for nuclear protein import, its predominant substrate seems to be ribosomal proteins. Binds to nucleoporins and the GTP-bound form of gsp1 (Ran). The chain is Probable importin subunit beta-4 (kap123) from Schizosaccharomyces pombe (strain 972 / ATCC 24843) (Fission yeast).